Consider the following 150-residue polypeptide: D-aminoacyl-tRNA deacylase (150 aa).

A Gly-cisPro motif, important for rejection of L-amino acids motif is present at residues Gly136 to Pro137.

Belongs to the DTD family. In terms of assembly, homodimer.

The protein resides in the cytoplasm. It catalyses the reaction glycyl-tRNA(Ala) + H2O = tRNA(Ala) + glycine + H(+). The catalysed reaction is a D-aminoacyl-tRNA + H2O = a tRNA + a D-alpha-amino acid + H(+). Functionally, an aminoacyl-tRNA editing enzyme that deacylates mischarged D-aminoacyl-tRNAs. Also deacylates mischarged glycyl-tRNA(Ala), protecting cells against glycine mischarging by AlaRS. Acts via tRNA-based rather than protein-based catalysis; rejects L-amino acids rather than detecting D-amino acids in the active site. By recycling D-aminoacyl-tRNA to D-amino acids and free tRNA molecules, this enzyme counteracts the toxicity associated with the formation of D-aminoacyl-tRNA entities in vivo and helps enforce protein L-homochirality. This Staphylococcus aureus (strain MRSA252) protein is D-aminoacyl-tRNA deacylase.